We begin with the raw amino-acid sequence, 239 residues long: Tryptophan synthase alpha chain (239 aa).

Active-site proton acceptor residues include Glu-34 and Asp-45.

It belongs to the TrpA family. As to quaternary structure, tetramer of two alpha and two beta chains.

It carries out the reaction (1S,2R)-1-C-(indol-3-yl)glycerol 3-phosphate + L-serine = D-glyceraldehyde 3-phosphate + L-tryptophan + H2O. It functions in the pathway amino-acid biosynthesis; L-tryptophan biosynthesis; L-tryptophan from chorismate: step 5/5. Functionally, the alpha subunit is responsible for the aldol cleavage of indoleglycerol phosphate to indole and glyceraldehyde 3-phosphate. In Thermotoga petrophila (strain ATCC BAA-488 / DSM 13995 / JCM 10881 / RKU-1), this protein is Tryptophan synthase alpha chain.